Consider the following 160-residue polypeptide: Phosphopantetheine adenylyltransferase (160 aa).

Thr-11 serves as a coordination point for substrate. Residues 11 to 12 (TF) and His-19 each bind ATP. 3 residues coordinate substrate: Lys-43, Thr-75, and Arg-89. ATP-binding positions include 90-92 (GLR), Glu-100, and 125-131 (YSFLSSS).

Belongs to the bacterial CoaD family. As to quaternary structure, homohexamer. Mg(2+) serves as cofactor.

The protein resides in the cytoplasm. It carries out the reaction (R)-4'-phosphopantetheine + ATP + H(+) = 3'-dephospho-CoA + diphosphate. The protein operates within cofactor biosynthesis; coenzyme A biosynthesis; CoA from (R)-pantothenate: step 4/5. Its function is as follows. Reversibly transfers an adenylyl group from ATP to 4'-phosphopantetheine, yielding dephospho-CoA (dPCoA) and pyrophosphate. This chain is Phosphopantetheine adenylyltransferase, found in Listeria monocytogenes serovar 1/2a (strain ATCC BAA-679 / EGD-e).